A 449-amino-acid chain; its full sequence is Tubulin alpha-1C chain (449 aa).

An MREC motif motif is present at residues 1–4 (MREC). Glutamine 11 is a GTP binding site. Lysine 40 is modified (N6-acetyllysine). GTP is bound by residues glutamate 71, serine 140, glycine 144, threonine 145, threonine 179, asparagine 206, and asparagine 228. Glutamate 71 provides a ligand contact to Mg(2+). Glutamate 254 is an active-site residue. Position 282 is a 3'-nitrotyrosine (tyrosine 282). Tyrosine 432 is subject to Phosphotyrosine. Serine 439 is subject to Phosphoserine. The residue at position 449 (tyrosine 449) is a 3'-nitrotyrosine.

It belongs to the tubulin family. Dimer of alpha and beta chains. A typical microtubule is a hollow water-filled tube with an outer diameter of 25 nm and an inner diameter of 15 nM. Alpha-beta heterodimers associate head-to-tail to form protofilaments running lengthwise along the microtubule wall with the beta-tubulin subunit facing the microtubule plus end conferring a structural polarity. Microtubules usually have 13 protofilaments but different protofilament numbers can be found in some organisms and specialized cells. Requires Mg(2+) as cofactor. Post-translationally, some glutamate residues at the C-terminus are polyglycylated, resulting in polyglycine chains on the gamma-carboxyl group. Glycylation is mainly limited to tubulin incorporated into axonemes (cilia and flagella) whereas glutamylation is prevalent in neuronal cells, centrioles, axonemes, and the mitotic spindle. Both modifications can coexist on the same protein on adjacent residues, and lowering polyglycylation levels increases polyglutamylation, and reciprocally. Cilia and flagella glycylation is required for their stability and maintenance. Flagella glycylation controls sperm motility. In terms of processing, some glutamate residues at the C-terminus are polyglutamylated, resulting in polyglutamate chains on the gamma-carboxyl group. Polyglutamylation plays a key role in microtubule severing by spastin (SPAST). SPAST preferentially recognizes and acts on microtubules decorated with short polyglutamate tails: severing activity by SPAST increases as the number of glutamates per tubulin rises from one to eight, but decreases beyond this glutamylation threshold. Glutamylation is also involved in cilia motility. Acetylation of alpha chains at Lys-40 is located inside the microtubule lumen. This modification has been correlated with increased microtubule stability, intracellular transport and ciliary assembly. Post-translationally, methylation of alpha chains at Lys-40 is found in mitotic microtubules and is required for normal mitosis and cytokinesis contributing to genomic stability. In terms of processing, nitration of Tyr-449 is irreversible and interferes with normal dynein intracellular distribution. Undergoes a tyrosination/detyrosination cycle, the cyclic removal and re-addition of a C-terminal tyrosine residue by the enzymes tubulin tyrosine carboxypeptidase (MATCAP1, VASH1 or VASH2) and tubulin tyrosine ligase (TTL), respectively. Post-translationally, tyrosination promotes microtubule interaction with CAP-Gly domain-containing proteins such as CLIP1, CLIP2 and DCTN1. Tyrosination regulates the initiation of dynein-dynactin motility via interaction with DCTN1, which brings the dynein-dynactin complex into contact with microtubules. In neurons, tyrosinated tubulins mediate the initiation of retrograde vesicle transport. In terms of processing, detyrosination is involved in metaphase plate congression by guiding chromosomes during mitosis: detyrosination promotes interaction with CENPE, promoting pole-proximal transport of chromosomes toward the equator. Detyrosination increases microtubules-dependent mechanotransduction in dystrophic cardiac and skeletal muscle. In cardiomyocytes, detyrosinated microtubules are required to resist to contractile compression during contraction: detyrosination promotes association with desmin (DES) at force-generating sarcomeres, leading to buckled microtubules and mechanical resistance to contraction.

Its subcellular location is the cytoplasm. It localises to the cytoskeleton. The catalysed reaction is GTP + H2O = GDP + phosphate + H(+). Functionally, tubulin is the major constituent of microtubules, a cylinder consisting of laterally associated linear protofilaments composed of alpha- and beta-tubulin heterodimers. Microtubules grow by the addition of GTP-tubulin dimers to the microtubule end, where a stabilizing cap forms. Below the cap, tubulin dimers are in GDP-bound state, owing to GTPase activity of alpha-tubulin. This chain is Tubulin alpha-1C chain (Tuba1c), found in Rattus norvegicus (Rat).